A 117-amino-acid chain; its full sequence is Biofilm growth-associated repressor (117 aa).

Residues 20 to 114 (AMEKRATEVA…ALYAIFCAPE (95 aa)) form the HTH arsR-type domain. A DNA-binding region (H-T-H motif) is located at residues 54-77 (VGELEAKLDIRQPTLSQQLGVLRE).

In terms of biological role, represses an operon that comprises at least itself and blh. Binds to a palindromic AT-rich sequence spanning the -10 region of the blh promoter and blocks transcription of the operon. In Agrobacterium fabrum (strain C58 / ATCC 33970) (Agrobacterium tumefaciens (strain C58)), this protein is Biofilm growth-associated repressor (bigR).